A 951-amino-acid polypeptide reads, in one-letter code: Bifunctional glutamine synthetase adenylyltransferase/adenylyl-removing enzyme (951 aa).

Residues 1 to 440 (MLPLPSELQI…VFDDLIGDET (440 aa)) are adenylyl removase. The interval 449–951 (HGLYKSLWQD…WLAANDANVS (503 aa)) is adenylyl transferase.

The protein belongs to the GlnE family. The cofactor is Mg(2+).

It carries out the reaction [glutamine synthetase]-O(4)-(5'-adenylyl)-L-tyrosine + phosphate = [glutamine synthetase]-L-tyrosine + ADP. It catalyses the reaction [glutamine synthetase]-L-tyrosine + ATP = [glutamine synthetase]-O(4)-(5'-adenylyl)-L-tyrosine + diphosphate. Involved in the regulation of glutamine synthetase GlnA, a key enzyme in the process to assimilate ammonia. When cellular nitrogen levels are high, the C-terminal adenylyl transferase (AT) inactivates GlnA by covalent transfer of an adenylyl group from ATP to specific tyrosine residue of GlnA, thus reducing its activity. Conversely, when nitrogen levels are low, the N-terminal adenylyl removase (AR) activates GlnA by removing the adenylyl group by phosphorolysis, increasing its activity. The regulatory region of GlnE binds the signal transduction protein PII (GlnB) which indicates the nitrogen status of the cell. This chain is Bifunctional glutamine synthetase adenylyltransferase/adenylyl-removing enzyme, found in Yersinia pestis bv. Antiqua (strain Antiqua).